A 664-amino-acid polypeptide reads, in one-letter code: Protein IQ-DOMAIN 28 (664 aa).

Residues 1-85 (MGKTPGKWIK…DESKDNLESR (85 aa)) form a disordered region. Residues 51–64 (VDPPVVSSQPVPAS) are compositionally biased toward low complexity. Basic and acidic residues predominate over residues 76-85 (DESKDNLESR). 3 consecutive IQ domains span residues 93–121 (LEQA…GIIR), 122–140 (LQAV…ATYS), and 144–170 (GIVK…QKKH). Residues 106–116 (AHQARRAFRTL) form a calmodulin-binding region. Disordered regions lie at residues 244 to 488 (EIPK…KEKD), 502 to 573 (DEKS…SGRK), and 637 to 664 (AKGS…DWKR). The Nuclear localization signal 1 motif lies at 251 to 258 (KKRNYQAV). The segment covering 305-315 (DPLRNESDKAN) has biased composition (basic and acidic residues). A compositionally biased stretch (low complexity) spans 339–353 (SPSLKRSSLSNGSKK). The short motif at 351–358 (SKKATLRS) is the Nuclear localization signal 2 element. 3 stretches are compositionally biased toward basic and acidic residues: residues 358 to 367 (SAEKKKKDIP), 427 to 447 (TEKE…KVLE), and 502 to 532 (DEKS…KCAD). Positions 536 to 547 (SSENGNVGSDNT) are enriched in polar residues. The segment covering 652 to 664 (DITHKSTRTDWKR) has biased composition (basic and acidic residues).

The protein belongs to the IQD family. As to quaternary structure, binds to multiple calmodulin (CaM) in the presence of Ca(2+) and CaM-like proteins.

The protein localises to the nucleus. Its subcellular location is the cytoplasm. It is found in the cytoskeleton. In terms of biological role, may be involved in cooperative interactions with calmodulins or calmodulin-like proteins. Recruits calmodulin proteins to microtubules, thus being a potential scaffold in cellular signaling and trafficking. May associate with nucleic acids and regulate gene expression at the transcriptional or post-transcriptional level. The sequence is that of Protein IQ-DOMAIN 28 from Arabidopsis thaliana (Mouse-ear cress).